The following is a 172-amino-acid chain: Large ribosomal subunit protein uL10 (172 aa).

This sequence belongs to the universal ribosomal protein uL10 family. In terms of assembly, part of the ribosomal stalk of the 50S ribosomal subunit. The N-terminus interacts with L11 and the large rRNA to form the base of the stalk. The C-terminus forms an elongated spine to which 3 L12 dimers bind in a sequential fashion forming a heptameric L10(L12)2(L12)2(L12)2 complex.

Forms part of the ribosomal stalk, playing a central role in the interaction of the ribosome with GTP-bound translation factors. This is Large ribosomal subunit protein uL10 from Agrobacterium fabrum (strain C58 / ATCC 33970) (Agrobacterium tumefaciens (strain C58)).